Here is a 253-residue protein sequence, read N- to C-terminus: Triosephosphate isomerase, cytosolic (253 aa).

N10 and K12 together coordinate substrate. The active-site Electrophile is the H96. Residue E166 is the Proton acceptor of the active site.

It belongs to the triosephosphate isomerase family. Homodimer.

It is found in the cytoplasm. It catalyses the reaction D-glyceraldehyde 3-phosphate = dihydroxyacetone phosphate. The protein operates within carbohydrate biosynthesis; gluconeogenesis. It participates in carbohydrate degradation; glycolysis; D-glyceraldehyde 3-phosphate from glycerone phosphate: step 1/1. The polypeptide is Triosephosphate isomerase, cytosolic (Zea mays (Maize)).